We begin with the raw amino-acid sequence, 513 residues long: MELENITENLSPIKIILQDIHSDNRVSLTLDKNVLCEKCPFFSKMFKGFKEQFEKIVVVKVPYVDITSKILKNFHGYKMEISDDWKSQIKLYMCYDYLGIKTDFPTKIKVQDYCFDELLDLIELNGYNEQTVKTLVGNLPVDNLEKLPIDFLTVMDQELVDFDIIAIDNNGVVSEVDCTMNTLKKIYEQSDCNFHVQYFEKTQKLMVLSSDNVSTGYNQNTIHTYEYNYKNDNYELKDKQPMTGKKYNHRIGGDRLEEEQQIIGKICFMKCNPEEDKLAFVIFNDGQNKIVTYDLDKKIYREVIRRNHITEICYSSNNKTVHIEKNNSVNSIYYNGILLFSENNILRYICHVNNDVIVFNEHCVNQKLNFVKTTRIPYYGSDIFRPIKNDSFGFNDDKIIYGTENSITDIKYKSDHIFIVSAKTIVVYSIFQSSVIKEICCGATNIKFIDRDRVIAYGINCPTNIYNISTGEKIKNIDYPNIKQLFILNNVKNYALKQRIKAILNSHTLKKLI.

In terms of domain architecture, BTB spans S11–D83.

This sequence belongs to the mimivirus BTB/WD family.

In Acanthamoeba polyphaga (Amoeba), this protein is Putative BTB/POZ domain-containing protein L55.